A 274-amino-acid polypeptide reads, in one-letter code: Formamidopyrimidine-DNA glycosylase (274 aa).

Pro2 functions as the Schiff-base intermediate with DNA in the catalytic mechanism. The Proton donor role is filled by Glu3. Lys57 serves as the catalytic Proton donor; for beta-elimination activity. DNA is bound by residues His92, Arg111, and Lys152. The FPG-type zinc-finger motif lies at 237-271 (QVYGRKGEECRECGTLIQAKVIGQRNSYFCPDCQP). Arg261 serves as the catalytic Proton donor; for delta-elimination activity.

The protein belongs to the FPG family. Monomer. The cofactor is Zn(2+).

It carries out the reaction Hydrolysis of DNA containing ring-opened 7-methylguanine residues, releasing 2,6-diamino-4-hydroxy-5-(N-methyl)formamidopyrimidine.. The catalysed reaction is 2'-deoxyribonucleotide-(2'-deoxyribose 5'-phosphate)-2'-deoxyribonucleotide-DNA = a 3'-end 2'-deoxyribonucleotide-(2,3-dehydro-2,3-deoxyribose 5'-phosphate)-DNA + a 5'-end 5'-phospho-2'-deoxyribonucleoside-DNA + H(+). Involved in base excision repair of DNA damaged by oxidation or by mutagenic agents. Acts as a DNA glycosylase that recognizes and removes damaged bases. Has a preference for oxidized purines, such as 7,8-dihydro-8-oxoguanine (8-oxoG). Has AP (apurinic/apyrimidinic) lyase activity and introduces nicks in the DNA strand. Cleaves the DNA backbone by beta-delta elimination to generate a single-strand break at the site of the removed base with both 3'- and 5'-phosphates. The chain is Formamidopyrimidine-DNA glycosylase from Haemophilus ducreyi (strain 35000HP / ATCC 700724).